We begin with the raw amino-acid sequence, 279 residues long: Malonyl-[acyl-carrier protein] O-methyltransferase (279 aa).

This sequence belongs to the methyltransferase superfamily.

It catalyses the reaction malonyl-[ACP] + S-adenosyl-L-methionine = malonyl-[ACP] methyl ester + S-adenosyl-L-homocysteine. Its pathway is cofactor biosynthesis; biotin biosynthesis. In terms of biological role, converts the free carboxyl group of a malonyl-thioester to its methyl ester by transfer of a methyl group from S-adenosyl-L-methionine (SAM). It allows to synthesize pimeloyl-ACP via the fatty acid synthetic pathway. The sequence is that of Malonyl-[acyl-carrier protein] O-methyltransferase from Hahella chejuensis (strain KCTC 2396).